A 96-amino-acid chain; its full sequence is Acylphosphatase (96 aa).

Positions 11–96 (ARRWYVRGRV…ITSYDSFRIR (86 aa)) constitute an Acylphosphatase-like domain. Catalysis depends on residues arginine 26 and asparagine 44.

It belongs to the acylphosphatase family.

It catalyses the reaction an acyl phosphate + H2O = a carboxylate + phosphate + H(+). The polypeptide is Acylphosphatase (acyP) (Solibacter usitatus (strain Ellin6076)).